A 553-amino-acid chain; its full sequence is Phenylalanine--tRNA ligase beta subunit (553 aa).

The region spanning Phe-273–Pro-349 is the B5 domain. Positions 327, 333, 336, and 337 each coordinate Mg(2+).

The protein belongs to the phenylalanyl-tRNA synthetase beta subunit family. Type 2 subfamily. In terms of assembly, tetramer of two alpha and two beta subunits. Requires Mg(2+) as cofactor.

Its subcellular location is the cytoplasm. It catalyses the reaction tRNA(Phe) + L-phenylalanine + ATP = L-phenylalanyl-tRNA(Phe) + AMP + diphosphate + H(+). In Methanocella arvoryzae (strain DSM 22066 / NBRC 105507 / MRE50), this protein is Phenylalanine--tRNA ligase beta subunit.